The chain runs to 418 residues: Gamma-glutamyl phosphate reductase (418 aa).

This sequence belongs to the gamma-glutamyl phosphate reductase family.

It localises to the cytoplasm. It catalyses the reaction L-glutamate 5-semialdehyde + phosphate + NADP(+) = L-glutamyl 5-phosphate + NADPH + H(+). Its pathway is amino-acid biosynthesis; L-proline biosynthesis; L-glutamate 5-semialdehyde from L-glutamate: step 2/2. Catalyzes the NADPH-dependent reduction of L-glutamate 5-phosphate into L-glutamate 5-semialdehyde and phosphate. The product spontaneously undergoes cyclization to form 1-pyrroline-5-carboxylate. This is Gamma-glutamyl phosphate reductase from Agathobacter rectalis (strain ATCC 33656 / DSM 3377 / JCM 17463 / KCTC 5835 / VPI 0990) (Eubacterium rectale).